The sequence spans 4691 residues: Plectin (4691 aa).

The globular 1 stretch occupies residues 1–1478 (MVAGMLMPLD…SELTTLTSQY (1478 aa)). At arginine 21 the chain carries Phosphoserine. Phosphotyrosine is present on valine 26. Disordered stretches follow at residues 113-161 (RSPH…TPVV) and 167-186 (GTLARPGPEPAPATDERDRV). The segment covering 137 to 154 (DPAREERQVYRRKEREEG) has biased composition (basic and acidic residues). Residues 181-411 (DERDRVQKKT…YVSSLYDAMP (231 aa)) form an actin-binding region. 2 Calponin-homology (CH) domains span residues 185-293 (RVQK…LHFQ) and 306-411 (MTAK…DAMP). The Spectrin 1 repeat unit spans residues 653–727 (LQSTQRRPEL…ERARNDESQL (75 aa)). Position 728 is a phosphoserine (serine 728). Spectrin repeat units lie at residues 748 to 832 (KLLN…REDH) and 845 to 938 (LQTQ…AIVQ). Threonine 823 carries the phosphothreonine modification. In terms of domain architecture, SH3 spans 949 to 1006 (RGHVPLIAVCDYKQVEVTVHKGDQCQLVGPAQPSHWKVLSGSSSEAAVPSVCFLVPPP). The required for interaction with intermediate filament proteins stretch occupies residues 963–4572 (VEVTVHKGDQ…ARTAQKLRDV (3610 aa)). Serine 1055 carries the phosphoserine modification. The Spectrin 4 repeat unit spans residues 1323-1423 (RERVTQLLER…QKFAKQYINA (101 aa)). Serine 1443 carries the phosphoserine modification. Coiled-coil stretches lie at residues 1477-1697 (QYIK…ERRL) and 1729-2764 (SFAE…TTQA). The interval 1479–2762 (IKFISETLRR…ALAHSEIATT (1284 aa)) is central fibrous rod domain. Residues 1626 to 1653 (RAEEAEAQKRQAQEEAERLRRQVQDESQ) form a disordered region. Serine 1729 carries the post-translational modification Phosphoserine. Residue lysine 1733 is modified to N6-acetyllysine. 3 disordered regions span residues 1801–1835 (SLAQADAEKQKEEAEREARRRGKAEEQAVRQRELA), 2100–2141 (AEDT…SLAA), and 2223–2317 (RLRS…KHKK). Basic and acidic residues-rich tracts occupy residues 1806-1835 (DAEKQKEEAEREARRRGKAEEQAVRQRELA), 2100-2116 (AEDTMRSKEQAELEAAR), 2124-2136 (EEQRRREAEERVQ), and 2223-2266 (RLRS…KQSA). Residues 2267–2280 (EEQAQAQAQAQAAA) show a composition bias toward low complexity. The span at 2281-2296 (EKLRKEAEQEAARRAQ) shows a compositional bias: basic and acidic residues. At serine 2639 the chain carries Phosphoserine. Residue lysine 2644 is modified to N6-acetyllysine. The interval 2675–2728 (LREEQQRQQQQMEQEKQELMASMEEARRRQREAEEGVRRKQEELQHLEQQRQQQ) is disordered. Over residues 2687–2728 (EQEKQELMASMEEARRRQREAEEGVRRKQEELQHLEQQRQQQ) the composition is skewed to basic and acidic residues. The globular 2 stretch occupies residues 2763 to 4691 (QAASTKALPN…SLGGPESAVA (1929 aa)). Position 2781 is a phosphoserine (serine 2781). Tyrosine 2788 bears the Phosphotyrosine mark. 6 Plectin repeats span residues 2795–2832 (QKVPAQQLQEAGILSQEELQRLAQGHTTVAELTQREDV), 2833–2870 (YRYLKGRSSIAGLLLKPTNEKLSVYTALQRQLLSPGTA), 2871–2908 (LILLEAQAASGFLLDPVRNRRLTVNEAVKEGVVGPELH), 2909–2946 (HKLLSAERAVTGYKDPYTGEQISLFQAMKKDLIVRDHG), 2947–2984 (VRLLEAQIATGGIIDPVHSHRVPVDVAYKRGYFDEEMN), and 2988–3022 (SDPSDDTKGFFDPNTHENLTYLQLLERCVEDPETG). Position 2809 is a phosphoserine (serine 2809). Threonine 2893 carries the post-translational modification Phosphothreonine. Tyrosine 3040 carries the post-translational modification Phosphotyrosine. N6-acetyllysine occurs at positions 3060 and 3098. Plectin repeat units lie at residues 3123–3160 (ALVPAAELLDSGVISHELYQQLQRGERSVREVAEADSV), 3161–3198 (RQALRGTNVIAGVWLEEAGQKLSIYEALKKDLLQPEVA), 3199–3236 (VALLEAQAGTGHIIDPATSARLTVDEAVRAGLVGPELH), 3237–3274 (EKLLSAEKAVTGYRDPYSGQSVSLFQALKKGLIPREQG), 3275–3312 (LRLLDAQLSTGGIVDPSKSHRVPLDVAYARGYLDKETN), and 3315–3350 (LTSPRDDARVYHDPSTQEPVTYSQLQQRCRSDQLTG). A compositionally biased stretch (basic and acidic residues) spans 3312-3326 (NRALTSPRDDARVYH). The tract at residues 3312-3338 (NRALTSPRDDARVYHDPSTQEPVTYSQ) is disordered. A compositionally biased stretch (polar residues) spans 3328-3338 (PSTQEPVTYSQ). Tyrosine 3369 is subject to Phosphotyrosine. Lysine 3427 carries the N6-acetyllysine modification. Plectin repeat units follow at residues 3492–3529 (RTLLQGSGCLAGIYLEDSKEKVTIYEAMRRGLLRPSTA), 3530–3567 (TLLLEAQAATGFLVDPVRNQRLYVHEAVKAGVVGPELH), 3568–3605 (EKLLSAEKAVTGYKDPYSGNTISLFQAMKKGLVLRDHA), 3606–3643 (IRLLEAQVATGGIIDPVHSHRLPVDVAYQRGYFDEEMN), and 3647–3681 (ADPSDDTKGFFDPNTHENLTYLQLLERCVEDPETG). Residue threonine 3792 is modified to Phosphothreonine. A Phosphotyrosine modification is found at tyrosine 3797. Plectin repeat units lie at residues 3827–3864 (WRYLYGTGAVAGVYLPGSRQTLTIYQALKKGLLSAEVA), 3865–3902 (RLLLEAQAATGFLLDPVKGERLTVDEAVRKGLVGPELH), 3903–3940 (DRLLSAERAVTGYRDPYTEQTISLFQAMKKELIPAEEA), 3941–3978 (LRLLDAQLATGGIVDPRLGFHLPLEVAYQRGYLNKDTH), and 3982–4015 (SEPSEVRSYVDPSTDERLSYTQLLKRCRRDDPSG). Residues 3954-4291 (VDPRLGFHLP…KRRVVIVDPE (338 aa)) form a required for interaction with type2 keratins, DES and VIM region. At threonine 4037 the chain carries Phosphothreonine. Residue serine 4061 is modified to Phosphoserine. 6 Plectin repeats span residues 4070–4107 (QKFLEGTSCIAGVFVDATKERLSVYQAMKKGIIRPGTA), 4108–4145 (FELLEAQAATGYVIDPIKGLKLTVEEAVRMGIVGPEFK), 4146–4183 (DKLLSAERAVTGYKDPYSGKLISLFQAMKKGLILKDHG), 4184–4221 (IRLLEAQIATGGIIDPEESHRLPVEVAYKRGLFDEEMN), 4225–4259 (TDPSDDTKGFFDPNTEENLTYLQLMERCITDPQTG), and 4272–4312 (RKTS…HQTY). A binding to intermediate filaments region spans residues 4257-4307 (QTGLCLLPLKEKKRERKTSSKSSVRKRRVVIVDPETGKEMSVYEAYRKGLI). The segment at 4387–4420 (FRSRSSSVGSSSSYPISSAGPRTQLASWSDPTEE) is disordered. 8 positions are modified to phosphoserine: serine 4389, serine 4391, serine 4392, serine 4393, serine 4396, serine 4397, serine 4398, and serine 4399. The span at 4389–4404 (SRSSSVGSSSSYPISS) shows a compositional bias: low complexity. At tyrosine 4400 the chain carries Phosphotyrosine. A phosphoserine mark is found at serine 4403 and serine 4413. Residues 4406-4416 (GPRTQLASWSD) are compositionally biased toward polar residues. 5 Plectin repeats span residues 4415–4452 (SDPTEETGPVAGILDTETLEKVSITEAMHRNLVDNITG), 4453–4490 (QRLLEAQACTGGIIDPSTGERFPVTEAVNKGLVDKIMV), 4491–4528 (DRINLAQKAFCGFEDPRTKTKMSAAQALKKGWLYYEAG), 4529–4566 (QRFLEVQYLTGGLIEPDTPGRVSLDEALQRGTVDARTA), and 4567–4604 (QKLRDVSAYSKYLTCPKTKLKISYKDALDRSMVEEGTG). Threonine 4418 bears the Phosphothreonine mark. Residues 4503–4572 (FEDPRTKTKM…ARTAQKLRDV (70 aa)) form a required for efficient interaction with KRT5 and KRT14 heterodimers region. A Phosphothreonine; by CDK1 modification is found at threonine 4546. Serine 4614 and serine 4620 each carry phosphoserine. Over residues 4618-4678 (YYSPYSVSGS…SGYGRRYASG (61 aa)) the composition is skewed to low complexity. Residues 4618 to 4691 (YYSPYSVSGS…SLGGPESAVA (74 aa)) are disordered. Residue tyrosine 4622 is modified to Phosphotyrosine. Phosphoserine is present on residues serine 4623, serine 4625, and serine 4629. Threonine 4630 is subject to Phosphothreonine. The interval 4632 to 4647 (GSRTGSRTGSRAGSRR) is 4 X 4 AA tandem repeats of G-S-R-X. Position 4633 is a phosphoserine (serine 4633). Arginine 4634 and arginine 4647 each carry omega-N-methylarginine. A phosphoserine mark is found at serine 4649 and serine 4682.

Belongs to the plakin or cytolinker family. As to quaternary structure, homodimer or homotetramer. Interacts (via actin-binding domain) with SYNE3. Interacts (via calponin-homology (CH) 1 domain) with VIM (via rod region). Interacts (via N-terminus) with DST isoform 2 (via N-terminus). Interacts with FER. Interacts with TOR1A. Interacts with ANK3. Identified in complexes that contain VIM, EZR, AHNAK, BFSP1, BFSP2, ANK2, PLEC, PRX and spectrin. In terms of assembly, interacts with KRT14, heterodimers consisting of KRT8 and KRT18, heterodimers consisting of KRT5 and KRT14, heterodimers consisting of KRT14 and KRT15, and heterodimers consisting of KRT1 and KRT10. Interacts with DES and VIM. In terms of processing, phosphorylated by CDK1; regulates dissociation from intermediate filaments during mitosis. Isoform PLEC-1A is phosphorylated on Ser-21. Isoform PLEC-1A is phosphorylated on Tyr-26. As to expression, detected in eye lens fiber cells (at protein level). Expressed at high levels in lung, brain, small intestine, muscle, heart and skin with lower levels found in kidney, liver, uterus, spleen and salivary gland.

It localises to the cytoplasm. The protein localises to the cytoskeleton. Its subcellular location is the cell junction. The protein resides in the hemidesmosome. It is found in the cell projection. It localises to the podosome. Its function is as follows. Interlinks intermediate filaments with microtubules and microfilaments and anchors intermediate filaments to desmosomes or hemidesmosomes. May be involved not only in the cross-linking and stabilization of cytoskeletal intermediate filaments network, but also in the regulation of their dynamics. This chain is Plectin (Plec), found in Mus musculus (Mouse).